Here is a 291-residue protein sequence, read N- to C-terminus: Ribosomal RNA small subunit methyltransferase H (291 aa).

S-adenosyl-L-methionine contacts are provided by residues 31-33, Asp-49, Phe-76, Asp-97, and Gln-104; that span reads GGY.

The protein belongs to the methyltransferase superfamily. RsmH family.

It localises to the cytoplasm. It catalyses the reaction cytidine(1402) in 16S rRNA + S-adenosyl-L-methionine = N(4)-methylcytidine(1402) in 16S rRNA + S-adenosyl-L-homocysteine + H(+). Its function is as follows. Specifically methylates the N4 position of cytidine in position 1402 (C1402) of 16S rRNA. The chain is Ribosomal RNA small subunit methyltransferase H from Anaplasma marginale (strain St. Maries).